The primary structure comprises 158 residues: 3-hydroxyacyl-[acyl-carrier-protein] dehydratase FabZ (158 aa).

Histidine 60 is an active-site residue.

The protein belongs to the thioester dehydratase family. FabZ subfamily.

It localises to the cytoplasm. It carries out the reaction a (3R)-hydroxyacyl-[ACP] = a (2E)-enoyl-[ACP] + H2O. In terms of biological role, involved in unsaturated fatty acids biosynthesis. Catalyzes the dehydration of short chain beta-hydroxyacyl-ACPs and long chain saturated and unsaturated beta-hydroxyacyl-ACPs. In Zymomonas mobilis subsp. mobilis (strain ATCC 31821 / ZM4 / CP4), this protein is 3-hydroxyacyl-[acyl-carrier-protein] dehydratase FabZ.